A 343-amino-acid polypeptide reads, in one-letter code: Glycerol-3-phosphate dehydrogenase [NAD(P)+] (343 aa).

NADPH is bound by residues W29, R49, and K122. Positions 122, 150, and 152 each coordinate sn-glycerol 3-phosphate. An NADPH-binding site is contributed by A154. Sn-glycerol 3-phosphate-binding residues include K205, D258, S268, R269, and N270. K205 (proton acceptor) is an active-site residue. Residue R269 participates in NADPH binding. Residues L288 and E290 each contribute to the NADPH site.

The protein belongs to the NAD-dependent glycerol-3-phosphate dehydrogenase family.

It localises to the cytoplasm. The catalysed reaction is sn-glycerol 3-phosphate + NAD(+) = dihydroxyacetone phosphate + NADH + H(+). The enzyme catalyses sn-glycerol 3-phosphate + NADP(+) = dihydroxyacetone phosphate + NADPH + H(+). The protein operates within membrane lipid metabolism; glycerophospholipid metabolism. Functionally, catalyzes the reduction of the glycolytic intermediate dihydroxyacetone phosphate (DHAP) to sn-glycerol 3-phosphate (G3P), the key precursor for phospholipid synthesis. The chain is Glycerol-3-phosphate dehydrogenase [NAD(P)+] from Mesorhizobium japonicum (strain LMG 29417 / CECT 9101 / MAFF 303099) (Mesorhizobium loti (strain MAFF 303099)).